The primary structure comprises 169 residues: Transcription antitermination protein NusB (169 aa).

The protein belongs to the NusB family.

Functionally, involved in transcription antitermination. Required for transcription of ribosomal RNA (rRNA) genes. Binds specifically to the boxA antiterminator sequence of the ribosomal RNA (rrn) operons. This Rhodococcus opacus (strain B4) protein is Transcription antitermination protein NusB.